Here is a 156-residue protein sequence, read N- to C-terminus: Endoribonuclease YbeY (156 aa).

Residues H122, H126, and H132 each contribute to the Zn(2+) site.

The protein belongs to the endoribonuclease YbeY family. It depends on Zn(2+) as a cofactor.

It is found in the cytoplasm. Functionally, single strand-specific metallo-endoribonuclease involved in late-stage 70S ribosome quality control and in maturation of the 3' terminus of the 16S rRNA. This Bacillus cereus (strain ZK / E33L) protein is Endoribonuclease YbeY.